A 459-amino-acid chain; its full sequence is Putrescine aminotransferase (459 aa).

Residues 150 to 151 (GT) and Q274 each bind pyridoxal 5'-phosphate. K300 carries the N6-(pyridoxal phosphate)lysine modification. A pyridoxal 5'-phosphate-binding site is contributed by T332.

It belongs to the class-III pyridoxal-phosphate-dependent aminotransferase family. Putrescine aminotransferase subfamily. The cofactor is pyridoxal 5'-phosphate.

It carries out the reaction an alkane-alpha,omega-diamine + 2-oxoglutarate = an omega-aminoaldehyde + L-glutamate. The catalysed reaction is putrescine + 2-oxoglutarate = 1-pyrroline + L-glutamate + H2O. The enzyme catalyses cadaverine + 2-oxoglutarate = 5-aminopentanal + L-glutamate. It functions in the pathway amine and polyamine degradation; putrescine degradation; 4-aminobutanal from putrescine (transaminase route): step 1/1. Functionally, catalyzes the aminotransferase reaction from putrescine to 2-oxoglutarate, leading to glutamate and 4-aminobutanal, which spontaneously cyclizes to form 1-pyrroline. This is the first step in one of two pathways for putrescine degradation, where putrescine is converted into 4-aminobutanoate (gamma-aminobutyrate or GABA) via 4-aminobutanal. Also functions as a cadaverine transaminase in a a L-lysine degradation pathway to succinate that proceeds via cadaverine, glutarate and L-2-hydroxyglutarate. This Salmonella choleraesuis (strain SC-B67) protein is Putrescine aminotransferase.